Reading from the N-terminus, the 69-residue chain is Large ribosomal subunit protein bL32c (69 aa).

This sequence belongs to the bacterial ribosomal protein bL32 family.

The protein localises to the plastid. It is found in the chloroplast. The protein is Large ribosomal subunit protein bL32c (rpl32) of Anthoceros angustus (Hornwort).